Here is a 182-residue protein sequence, read N- to C-terminus: UPF0316 protein Sde_0566 (182 aa).

Helical transmembrane passes span 7 to 27 (VAPELLALLIFVSRVIDVSLG), 41 to 61 (LAAFIGFFEIMIWLVAAGQVF), and 67 to 87 (WYLALAYAGGFSMGNYVGMWI).

It belongs to the UPF0316 family.

The protein resides in the cell membrane. This chain is UPF0316 protein Sde_0566, found in Saccharophagus degradans (strain 2-40 / ATCC 43961 / DSM 17024).